Consider the following 292-residue polypeptide: MSSLPTPLPPYKWTLLTAGNANVVYKSDETDLLLRLRRNRNAPSTAEVDEYLTGTIRPAIGPFLFHYTVVNLPLGFLESLPEAENLDLGEPLGLLMENLGPKPNETNVLKSHAVKINYSDNWESYTVELKPKWLLQSPTAPKDSINCRTCALQLKREKPRICPLKLFNEDEQTSLQALEDVFPGTQKQFEPLAKFFSNSELFAEIRHMQHGDELGILGYANYVQVPPQFVTAMTMRDVSLFVHVQGDSVNGKIVDADLKSVSEKRDYWASLETDLIEGGWYEKPGTNCLLRN.

Residues 128-132 (ELKPK) carry the EXKPK motif motif.

The protein belongs to the IPK1 type 1 family.

The protein resides in the nucleus. It catalyses the reaction 1D-myo-inositol 1,3,4,5,6-pentakisphosphate + ATP = 1D-myo-inositol hexakisphosphate + ADP + H(+). Has kinase activity and phosphorylates inositol-1,3,4,5,6-pentakisphosphate (Ins(1,3,4,5,6)P5) to produce 1,2,3,4,5,6-hexakisphosphate (InsP6), also known as phytate. The polypeptide is Inositol-pentakisphosphate 2-kinase (IPK1) (Yarrowia lipolytica (strain CLIB 122 / E 150) (Yeast)).